A 76-amino-acid polypeptide reads, in one-letter code: Theta defensin subunit A (76 aa).

The first 22 residues, 1–22, serve as a signal peptide directing secretion; it reads MRTFALLTAMLLLVALHAQAEA. Residues 23–64 constitute a propeptide that is removed on maturation; that stretch reads RQARADEAAAQQQPGADDQGMAHSFTWPENAALPLSESAKGL. The disordered stretch occupies residues 25 to 45; the sequence is ARADEAAAQQQPGADDQGMAH. Low complexity predominate over residues 30–44; that stretch reads AAAQQQPGADDQGMA. Residue Arg-65 forms a Cyclopeptide (Arg-Cys) (interchain with C-73 in subunit A); in form BTD-3 linkage. Arg-65 is covalently cross-linked (Cyclopeptide (Arg-Cys) (interchain with C-73 in subunit B); in form BTD-1). A Cyclopeptide (Arg-Cys) (interchain with C-73 in subunit C); in form BTD-4 cross-link involves residue Arg-65. A Cyclopeptide (Arg-Cys) (interchain with C-73 in subunit D); in form BTD-7 cross-link involves residue Arg-65. The cysteines at positions 68 and 73 are disulfide-linked. Residue Cys-73 forms a Cyclopeptide (Cys-Arg) (interchain with R-65 in subunit A); in form BTD-3 linkage. Cys-73 is covalently cross-linked (Cyclopeptide (Cys-Arg) (interchain with R-65 in subunit B); in form BTD-1). Cys-73 is covalently cross-linked (Cyclopeptide (Cys-Arg) (interchain with R-65 in subunit C); in form BTD-4). A Cyclopeptide (Cys-Arg) (interchain with R-65 in subunit D); in form BTD-7 cross-link involves residue Cys-73. Residues 74–76 constitute a propeptide that is removed on maturation; it reads RLL.

Belongs to the alpha-defensin family. Theta subfamily. BTD-1 is a cyclic heterodimer composed of subunits A and B; disulfide-linked. BTD-3 is a cyclic homodimer composed of two subunits A; disulfide-linked. BTD-4 is a cyclic heterodimer composed of subunits A and C; disulfide-linked. BTD-7 is a cyclic heterodimer composed of subunits A and D; disulfide-linked. In terms of processing, forms a cyclic peptide with subunit B (BTD-1), subunit A (BTD-3), subunit C (BTD-4), or subunit D (BTD-7). An additional intersubunit disulfide bond is formed.

Its function is as follows. BTD-1, BTD-3, BTD-4 and BTD-7 have antimicrobial activity against the Gram-negative bacterium E.coli ML35, the Gram-positive bacterium S.aureus 502a, and the fungus C.albicans 16820. BTD-3 is more effective against E.coli than BTD-1, BTD-4 and BTD-7. This chain is Theta defensin subunit A (BTDA), found in Papio anubis (Olive baboon).